The following is a 106-amino-acid chain: Integration host factor subunit alpha (106 aa).

It belongs to the bacterial histone-like protein family. Heterodimer of an alpha and a beta chain.

This protein is one of the two subunits of integration host factor, a specific DNA-binding protein that functions in genetic recombination as well as in transcriptional and translational control. This chain is Integration host factor subunit alpha, found in Nitrobacter winogradskyi (strain ATCC 25391 / DSM 10237 / CIP 104748 / NCIMB 11846 / Nb-255).